The chain runs to 74 residues: MWTRHRDASWWLMKINLLRGYLLSATQHGNKPPSRHEAESLKRRAHHSPYTCTLTTLTFPENNPLIQTVHGKSV.

The segment at 26-45 (TQHGNKPPSRHEAESLKRRA) is disordered.

The protein is Protein sok (sok) of Escherichia coli.